The sequence spans 421 residues: Structure-specific endonuclease subunit SLX1 (421 aa).

The region spanning 13–95 (AFYCCYLLRS…QHTKESRHAE (83 aa)) is the GIY-YIG domain. 2 disordered regions span residues 34–57 (TPEPSRRLAQHNGDRTGGARKTSS) and 96–120 (VERCESEQLGTRGSSRTGKEVKRAG). The SLX1-type zinc-finger motif lies at 225–280 (CGVCKQRLNPRNDMIAICSHSLCRCASHLLCLSAHFLEAAGFIGKLIPKEGTCPAC). The segment covering 310-322 (RRRTEQVGKRKIS) has biased composition (basic residues). The segment at 310–339 (RRRTEQVGKRKISNHVSSEKGESEASMPST) is disordered.

It belongs to the SLX1 family. As to quaternary structure, forms a heterodimer with SLX4. Requires a divalent metal cation as cofactor.

The protein localises to the nucleus. In terms of biological role, catalytic subunit of the SLX1-SLX4 structure-specific endonuclease that resolves DNA secondary structures generated during DNA repair and recombination. Has endonuclease activity towards branched DNA substrates, introducing single-strand cuts in duplex DNA close to junctions with ss-DNA. The chain is Structure-specific endonuclease subunit SLX1 from Ajellomyces capsulatus (strain G186AR / H82 / ATCC MYA-2454 / RMSCC 2432) (Darling's disease fungus).